We begin with the raw amino-acid sequence, 188 residues long: Elongation factor P (188 aa).

The residue at position 34 (Lys34) is an N6-(3,6-diaminohexanoyl)-5-hydroxylysine.

The protein belongs to the elongation factor P family. Post-translationally, may be beta-lysylated on the epsilon-amino group of Lys-34 by the combined action of EpmA and EpmB, and then hydroxylated on the C5 position of the same residue by EpmC (if this protein is present). Lysylation is critical for the stimulatory effect of EF-P on peptide-bond formation. The lysylation moiety may extend toward the peptidyltransferase center and stabilize the terminal 3-CCA end of the tRNA. Hydroxylation of the C5 position on Lys-34 may allow additional potential stabilizing hydrogen-bond interactions with the P-tRNA.

The protein localises to the cytoplasm. Its pathway is protein biosynthesis; polypeptide chain elongation. Its function is as follows. Involved in peptide bond synthesis. Alleviates ribosome stalling that occurs when 3 or more consecutive Pro residues or the sequence PPG is present in a protein, possibly by augmenting the peptidyl transferase activity of the ribosome. Modification of Lys-34 is required for alleviation. This is Elongation factor P from Vibrio campbellii (strain ATCC BAA-1116).